Reading from the N-terminus, the 173-residue chain is Crossover junction endodeoxyribonuclease RuvC (173 aa).

Residues D8, E67, and D139 contribute to the active site. 3 residues coordinate Mg(2+): D8, E67, and D139.

Belongs to the RuvC family. In terms of assembly, homodimer which binds Holliday junction (HJ) DNA. The HJ becomes 2-fold symmetrical on binding to RuvC with unstacked arms; it has a different conformation from HJ DNA in complex with RuvA. In the full resolvosome a probable DNA-RuvA(4)-RuvB(12)-RuvC(2) complex forms which resolves the HJ. Requires Mg(2+) as cofactor.

The protein resides in the cytoplasm. The catalysed reaction is Endonucleolytic cleavage at a junction such as a reciprocal single-stranded crossover between two homologous DNA duplexes (Holliday junction).. The RuvA-RuvB-RuvC complex processes Holliday junction (HJ) DNA during genetic recombination and DNA repair. Endonuclease that resolves HJ intermediates. Cleaves cruciform DNA by making single-stranded nicks across the HJ at symmetrical positions within the homologous arms, yielding a 5'-phosphate and a 3'-hydroxyl group; requires a central core of homology in the junction. The consensus cleavage sequence is 5'-(A/T)TT(C/G)-3'. Cleavage occurs on the 3'-side of the TT dinucleotide at the point of strand exchange. HJ branch migration catalyzed by RuvA-RuvB allows RuvC to scan DNA until it finds its consensus sequence, where it cleaves and resolves the cruciform DNA. In Aliivibrio fischeri (strain ATCC 700601 / ES114) (Vibrio fischeri), this protein is Crossover junction endodeoxyribonuclease RuvC.